A 2040-amino-acid polypeptide reads, in one-letter code: Apolipoprotein(a) (2040 aa).

Residues 1–19 (MEHKEVVLLLLLFLKSAAP) form the signal peptide. 10 consecutive Kringle domains span residues 27-105 (DCYH…LTQC), 141-219 (ECYH…LTQC), 255-333 (ECYH…LTQC), 369-447 (ECYH…LTQC), 483-561 (ECYH…LTQC), 597-675 (ECYH…LTQC), 711-789 (ECYH…LTQC), 825-903 (ECYH…LTQC), 939-1017 (ECYH…LTRC), and 1053-1131 (DCYY…LTQC). 30 cysteine pairs are disulfide-bonded: Cys28–Cys105, Cys49–Cys88, Cys77–Cys100, Cys142–Cys219, Cys163–Cys202, Cys191–Cys214, Cys256–Cys333, Cys277–Cys316, Cys305–Cys328, Cys370–Cys447, Cys391–Cys430, Cys419–Cys442, Cys484–Cys561, Cys505–Cys544, Cys533–Cys556, Cys598–Cys675, Cys619–Cys658, Cys647–Cys670, Cys712–Cys789, Cys733–Cys772, Cys761–Cys784, Cys826–Cys903, Cys847–Cys886, Cys875–Cys898, Cys940–Cys1017, Cys961–Cys1000, Cys989–Cys1012, Cys1054–Cys1131, Cys1075–Cys1114, and Cys1103–Cys1126. N-linked (GlcNAc...) asparagine glycosylation is present at Asn61. Asn101 carries an N-linked (GlcNAc...) asparagine glycan. Asn215 is a glycosylation site (N-linked (GlcNAc...) asparagine). The N-linked (GlcNAc...) asparagine glycan is linked to Asn329. Asn443 carries an N-linked (GlcNAc...) asparagine glycan. A glycan (N-linked (GlcNAc...) asparagine) is linked at Asn557. The N-linked (GlcNAc...) asparagine glycan is linked to Asn671. The N-linked (GlcNAc...) asparagine glycan is linked to Asn785. N-linked (GlcNAc...) asparagine glycosylation is present at Asn899. An N-linked (GlcNAc...) asparagine glycan is attached at Asn1013. An N-linked (GlcNAc...) asparagine glycan is attached at Asn1127. A disordered region spans residues 1147–1166 (DPSTEASSEEAPTEQSPGVQ). Kringle domains follow at residues 1167-1245 (DCYH…LTQC) and 1273-1351 (DCYH…LTQC). 6 cysteine pairs are disulfide-bonded: Cys1168/Cys1245, Cys1189/Cys1228, Cys1217/Cys1240, Cys1274/Cys1351, Cys1295/Cys1334, and Cys1323/Cys1346. A glycan (N-linked (GlcNAc...) asparagine) is linked at Asn1241. 2 N-linked (GlcNAc...) asparagine glycosylation sites follow: Asn1347 and Asn1381. Residues 1365–1388 (VPVPSTELPSEEAPTENSTGVQDC) form a disordered region. Residues 1387–1465 (DCYRGDGQSY…RWEYCNLTRC (79 aa)) enclose the Kringle 13 domain. Cystine bridges form between Cys1388–Cys1465, Cys1409–Cys1448, and Cys1437–Cys1460. N-linked (GlcNAc...) asparagine glycosylation is present at Asn1461. The interval 1476–1497 (PTVAPVPSTEAPSEQAPPEKSP) is disordered. Kringle domains are found at residues 1501–1579 (DCYH…LTQC), 1615–1693 (QCYH…LTRC), and 1719–1799 (DCMF…IPLC). Intrachain disulfides connect Cys1502-Cys1579, Cys1523-Cys1562, Cys1551-Cys1574, Cys1616-Cys1693, Cys1637-Cys1676, Cys1665-Cys1688, Cys1720-Cys1799, Cys1741-Cys1782, Cys1770-Cys1794, and Cys1846-Cys1862. Asn1575 carries N-linked (GlcNAc...) asparagine glycosylation. The N-linked (GlcNAc...) asparagine glycan is linked to Asn1689. Residues 1820–2038 (IVGGCVAHPH…FVTWIEGMMR (219 aa)) form the Peptidase S1 domain. Residues His1861 and Asp1904 each act as charge relay system in the active site. 3 disulfide bridges follow: Cys1938–Cys1996, Cys1968–Cys1975, and Cys1986–Cys2014. Ser1990 functions as the Charge relay system in the catalytic mechanism.

Belongs to the peptidase S1 family. Plasminogen subfamily. As to quaternary structure, disulfide-linked to apo-B100. Binds to fibronectin and decorin. N- and O-glycosylated. The N-glycans are complex biantennary structures present in either a mono- or disialylated state. The O-glycans are mostly (80%) represented by the monosialylated core type I structure, NeuNAcalpha2-3Galbeta1-3GalNAc, with smaller amounts of disialylated and non-sialylated O-glycans also detected.

Functionally, apo(a) is the main constituent of lipoprotein(a) (Lp(a)). It has serine proteinase activity and is able of autoproteolysis. Inhibits tissue-type plasminogen activator 1. Lp(a) may be a ligand for megalin/Gp 330. This is Apolipoprotein(a) (LPA) from Homo sapiens (Human).